The primary structure comprises 188 residues: Transmembrane protein 160 (188 aa).

The N-terminal 96 residues, 1 to 96 (MGGGWWWARA…ISFMQSDMGR (96 aa)), are a transit peptide targeting the mitochondrion. The disordered stretch occupies residues 24–52 (PPQRPRSGGARGSFAPGHGPRAGASPPPV). Ser-48 is modified (phosphoserine). The next 2 membrane-spanning stretches (helical) occupy residues 102 to 122 (FFLL…VGLA) and 135 to 155 (AAVG…AVGL). The interval 168-188 (PEDDGTASAEGPDEAGRPPPE) is disordered.

Belongs to the TMEM160 family.

It is found in the mitochondrion inner membrane. The protein is Transmembrane protein 160 of Homo sapiens (Human).